The sequence spans 361 residues: mRNA export factor ICP27 homolog (361 aa).

Residues methionine 1–serine 15 are compositionally biased toward low complexity. A disordered region spans residues methionine 1 to alanine 107. The span at glycine 16 to proline 36 shows a compositional bias: basic and acidic residues. An RGG-box region spans residues arginine 45–arginine 54. Residues arginine 80–glutamate 99 show a composition bias toward basic and acidic residues. The Zn(2+) site is built by cysteine 253, histidine 328, cysteine 332, and cysteine 337. The CHC2-type zinc-finger motif lies at cysteine 253 to cysteine 337.

This sequence belongs to the HHV-1 ICP27 protein family. Homodimer. Homodimerization is required for transactivation. Associates in a complex with RNA, and host export factors NXF1/TAP and ALYREF; these interactions allow nuclear export of viral transcripts. Interacts with three host shuttling SR proteins SRSF1, SRSF3 and SRSF7. Interacts with host SRPK1. Interacts with IE62; this interaction enhances IE62 transactivation.

The protein resides in the host cytoplasm. It is found in the host nucleus. Its function is as follows. Multifunctional regulator of the expression of viral genes that mediates nuclear export of viral intronless mRNAs. This immediate early (EI) protein promotes the nuclear export of viral intronless mRNAs by interacting with mRNAs and host NXF1/TAP. The protein is mRNA export factor ICP27 homolog of Suid herpesvirus 1 (strain Kaplan) (SuHV-1).